The chain runs to 449 residues: Histidinol dehydrogenase (449 aa).

NAD(+) is bound by residues tyrosine 135, glutamine 199, and asparagine 229. Threonine 252, glutamine 274, and histidine 277 together coordinate substrate. Positions 274 and 277 each coordinate Zn(2+). Catalysis depends on proton acceptor residues glutamate 343 and histidine 344. The substrate site is built by histidine 344, aspartate 377, glutamate 431, and histidine 436. Zn(2+) is bound at residue aspartate 377. Histidine 436 lines the Zn(2+) pocket.

The protein belongs to the histidinol dehydrogenase family. Requires Zn(2+) as cofactor.

The catalysed reaction is L-histidinol + 2 NAD(+) + H2O = L-histidine + 2 NADH + 3 H(+). Its pathway is amino-acid biosynthesis; L-histidine biosynthesis; L-histidine from 5-phospho-alpha-D-ribose 1-diphosphate: step 9/9. In terms of biological role, catalyzes the sequential NAD-dependent oxidations of L-histidinol to L-histidinaldehyde and then to L-histidine. This Corynebacterium diphtheriae (strain ATCC 700971 / NCTC 13129 / Biotype gravis) protein is Histidinol dehydrogenase.